Consider the following 379-residue polypeptide: Glutamate 5-kinase (379 aa).

Lys-15 lines the ATP pocket. Residues Ser-56, Asp-143, and Asn-155 each contribute to the substrate site. 175–176 (SD) lines the ATP pocket. The 78-residue stretch at 281 to 358 (KGTLTIDAGA…CDAAQILGIS (78 aa)) folds into the PUA domain.

The protein belongs to the glutamate 5-kinase family.

Its subcellular location is the cytoplasm. The catalysed reaction is L-glutamate + ATP = L-glutamyl 5-phosphate + ADP. The protein operates within amino-acid biosynthesis; L-proline biosynthesis; L-glutamate 5-semialdehyde from L-glutamate: step 1/2. Functionally, catalyzes the transfer of a phosphate group to glutamate to form L-glutamate 5-phosphate. The chain is Glutamate 5-kinase from Nitrobacter hamburgensis (strain DSM 10229 / NCIMB 13809 / X14).